The sequence spans 108 residues: Urease subunit gamma (108 aa).

It belongs to the urease gamma subunit family. As to quaternary structure, heterotrimer of UreA (gamma), UreB (beta) and UreC (alpha) subunits. Three heterotrimers associate to form the active enzyme.

It localises to the cytoplasm. It catalyses the reaction urea + 2 H2O + H(+) = hydrogencarbonate + 2 NH4(+). It functions in the pathway nitrogen metabolism; urea degradation; CO(2) and NH(3) from urea (urease route): step 1/1. This chain is Urease subunit gamma, found in Haloquadratum walsbyi (strain DSM 16790 / HBSQ001).